The chain runs to 259 residues: MAVGKNKKLMKGKKGGKKKVVDVFTKKEWYDVKAPSYFKKRQVGKTPVNRTAGTKLSADGLRGRVYEMSLADLNDDESTFRKVKLQVEEIQGTECLTNFHGMSLTTDKLRSLVKKWRSLIEAFVDVKTNDGYVLRIFSIGFTKKQANSDRKTCYAQSAQKRALRAKMVEIMQREATCDLKEFVSKLMPGTIGQEIQKKCQSIFPLQDVYIRKVKVLKKPRFDVSKLLELHGEAGGVTADKGKTVAKSGEFVEPKPQTSV.

The protein belongs to the eukaryotic ribosomal protein eS1 family. Component of the small ribosomal subunit. Mature ribosomes consist of a small (40S) and a large (60S) subunit. The 40S subunit contains about 33 different proteins and 1 molecule of RNA (18S). The 60S subunit contains about 49 different proteins and 3 molecules of RNA (25S, 5.8S and 5S).

The protein resides in the cytoplasm. This chain is Small ribosomal subunit protein eS1, found in Monosiga brevicollis (Choanoflagellate).